Here is a 477-residue protein sequence, read N- to C-terminus: Putative 4-(hydroxymethyl)benzenesulfonate dehydrogenase TsaD2 (477 aa).

NAD(+) contacts are provided by residues 154-155 (WN), 178-181 (KAAE), and 230-231 (GS). Glu-252 serves as the catalytic Proton acceptor. NAD(+) is bound at residue Leu-253. Residue Cys-286 is the Nucleophile of the active site. Glu-381 contacts NAD(+).

The protein belongs to the aldehyde dehydrogenase family. In terms of assembly, homodimer.

The enzyme catalyses 4-(hydroxymethyl)benzenesulfonate + NAD(+) = 4-formylbenzenesulfonate + NADH + H(+). Its function is as follows. Involved in the toluene-4-sulfonate degradation pathway. Does not discriminate between the sulfonate and the carboxyl substituents and can also be involved in the p-toluenecarboxylate degradation pathway. The polypeptide is Putative 4-(hydroxymethyl)benzenesulfonate dehydrogenase TsaD2 (tsaD2) (Comamonas testosteroni (Pseudomonas testosteroni)).